Here is a 271-residue protein sequence, read N- to C-terminus: Histone chaperone asf-1 (271 aa).

Residues 152 to 271 (KWDSEASAPP…PKQQGMAMAQ (120 aa)) are disordered. Composition is skewed to acidic residues over residues 168–185 (PEAD…DELA) and 211–258 (IEED…EMEI).

The protein belongs to the ASF1 family. Interacts with histone H3 and histone H4.

The protein localises to the nucleus. Functionally, histone chaperone that facilitates histone deposition and histone exchange and removal during nucleosome assembly and disassembly. In Neurospora crassa (strain ATCC 24698 / 74-OR23-1A / CBS 708.71 / DSM 1257 / FGSC 987), this protein is Histone chaperone asf-1 (asf-1).